Consider the following 858-residue polypeptide: Protein translocase subunit SecA (858 aa).

ATP is bound by residues Gln-88, 106–110 (GEGKT), and Asp-494. Positions 808 to 848 (KEDRGQLSYSGGGNAEDARNTPAKAAPRIGRNDPCPCGSGR) are disordered. The Zn(2+) site is built by Cys-842, Cys-844, Cys-853, and Cys-854.

The protein belongs to the SecA family. As to quaternary structure, monomer and homodimer. Part of the essential Sec protein translocation apparatus which comprises SecA, SecYEG and auxiliary proteins SecDF-YajC and YidC. The cofactor is Zn(2+).

Its subcellular location is the cell inner membrane. The protein resides in the cytoplasm. It carries out the reaction ATP + H2O + cellular proteinSide 1 = ADP + phosphate + cellular proteinSide 2.. Part of the Sec protein translocase complex. Interacts with the SecYEG preprotein conducting channel. Has a central role in coupling the hydrolysis of ATP to the transfer of proteins into and across the cell membrane, serving as an ATP-driven molecular motor driving the stepwise translocation of polypeptide chains across the membrane. This Desulfovibrio desulfuricans (strain ATCC 27774 / DSM 6949 / MB) protein is Protein translocase subunit SecA.